The following is a 395-amino-acid chain: Putative 8-amino-7-oxononanoate synthase (395 aa).

Position 23 (R23) interacts with substrate. 110-111 is a pyridoxal 5'-phosphate binding site; that stretch reads GY. A substrate-binding site is contributed by H135. Residues S181, 206-209, and 237-240 each bind pyridoxal 5'-phosphate; these read DEAH and TFSK. An N6-(pyridoxal phosphate)lysine modification is found at K240. T354 serves as a coordination point for substrate.

It belongs to the class-II pyridoxal-phosphate-dependent aminotransferase family. BioF subfamily. Homodimer. It depends on pyridoxal 5'-phosphate as a cofactor.

The enzyme catalyses 6-carboxyhexanoyl-[ACP] + L-alanine + H(+) = (8S)-8-amino-7-oxononanoate + holo-[ACP] + CO2. The protein operates within cofactor biosynthesis; biotin biosynthesis. Its function is as follows. Catalyzes the decarboxylative condensation of pimeloyl-[acyl-carrier protein] and L-alanine to produce 8-amino-7-oxononanoate (AON), [acyl-carrier protein], and carbon dioxide. This is Putative 8-amino-7-oxononanoate synthase (bioF) from Halalkalibacterium halodurans (strain ATCC BAA-125 / DSM 18197 / FERM 7344 / JCM 9153 / C-125) (Bacillus halodurans).